Reading from the N-terminus, the 689-residue chain is Methionine--tRNA ligase (689 aa).

Residues 19–29 carry the 'HIGH' region motif; that stretch reads PYPTGDLHIGH. The Zn(2+) site is built by cysteine 150, cysteine 153, cysteine 162, and cysteine 166. Residues 338–342 carry the 'KMSKS' region motif; that stretch reads GLSTS. Threonine 341 serves as a coordination point for ATP. In terms of domain architecture, tRNA-binding spans 591–689; it reads EFQALDLRVG…EDSEPGTKVM (99 aa).

This sequence belongs to the class-I aminoacyl-tRNA synthetase family. MetG type 1 subfamily. In terms of assembly, homodimer. Zn(2+) serves as cofactor.

The protein resides in the cytoplasm. The enzyme catalyses tRNA(Met) + L-methionine + ATP = L-methionyl-tRNA(Met) + AMP + diphosphate. In terms of biological role, is required not only for elongation of protein synthesis but also for the initiation of all mRNA translation through initiator tRNA(fMet) aminoacylation. The chain is Methionine--tRNA ligase from Halobacterium salinarum (strain ATCC 700922 / JCM 11081 / NRC-1) (Halobacterium halobium).